We begin with the raw amino-acid sequence, 717 residues long: F-box only protein 42 (717 aa).

Over residues Met-1–Glu-30 the composition is skewed to acidic residues. Residues Met-1–Met-47 are disordered. A compositionally biased stretch (basic and acidic residues) spans Glu-31–His-43. The F-box domain maps to Asn-44–Phe-93. Kelch repeat units lie at residues Ser-132–Asp-184, Leu-186–Asp-242, Met-244–Asp-293, and Thr-295–His-342. Disordered stretches follow at residues Arg-361–Glu-472 and Pro-508–Thr-539. Over residues Pro-363–Ser-376 the composition is skewed to low complexity. Ser-365 and Ser-373 each carry phosphoserine. A Phosphothreonine modification is found at Thr-378. Composition is skewed to polar residues over residues Gln-416–Gly-426 and Ser-455–Ser-469. At Ser-552 the chain carries Phosphoserine. Over residues Gly-570 to Gly-596 the composition is skewed to low complexity. The disordered stretch occupies residues Gly-570–Leu-635.

As to quaternary structure, component of some SCF complex, composed of CUL1, SKP1, RBX1 and FBXO42. Interacts (via the kelch domain) with p53/TP53; interaction is direct.

Its function is as follows. Substrate-recognition component of some SCF (SKP1-CUL1-F-box protein)-type E3 ubiquitin ligase complex. Specifically recognizes p53/TP53, promoting its ubiquitination and degradation. In Pongo abelii (Sumatran orangutan), this protein is F-box only protein 42 (FBXO42).